Consider the following 295-residue polypeptide: Sulfotransferase 1A3 (295 aa).

48 to 53 (KSGTTW) lines the 3'-phosphoadenylyl sulfate pocket. Residues Asp86 and 106–108 (KSH) contribute to the dopamine site. Residue His108 is the Proton acceptor of the active site. 3'-phosphoadenylyl sulfate-binding residues include Arg130 and Ser138. Residue Glu146 participates in dopamine binding. Residues Tyr193, 227 to 232 (TSFKEM), and 257 to 259 (RKG) contribute to the 3'-phosphoadenylyl sulfate site.

The protein belongs to the sulfotransferase 1 family. In terms of assembly, homodimer. Post-translationally, the N-terminus is blocked. Liver, colon, kidney, lung, brain, spleen, small intestine, placenta and leukocyte.

It is found in the cytoplasm. It catalyses the reaction a phenol + 3'-phosphoadenylyl sulfate = an aryl sulfate + adenosine 3',5'-bisphosphate + H(+). The catalysed reaction is 4-nitrophenol + 3'-phosphoadenylyl sulfate = 4-nitrophenyl sulfate + adenosine 3',5'-bisphosphate. The enzyme catalyses dopamine + 3'-phosphoadenylyl sulfate = dopamine 3-O-sulfate + adenosine 3',5'-bisphosphate + H(+). It carries out the reaction dopamine + 3'-phosphoadenylyl sulfate = dopamine 4-O-sulfate + adenosine 3',5'-bisphosphate + H(+). It catalyses the reaction serotonin + 3'-phosphoadenylyl sulfate = serotonin O-sulfate + adenosine 3',5'-bisphosphate + H(+). The catalysed reaction is (R)-adrenaline + 3'-phosphoadenylyl sulfate = (R)-adrenaline 4'-O-sulfate + adenosine 3',5'-bisphosphate + H(+). The enzyme catalyses (R)-noradrenaline + 3'-phosphoadenylyl sulfate = (R)-noradrenaline 4'-O-sulfate + adenosine 3',5'-bisphosphate + H(+). It carries out the reaction 3,3',5-triiodo-L-thyronine + 3'-phosphoadenylyl sulfate = 3,3',5-triiodo-L-thyronine sulfate + adenosine 3',5'-bisphosphate + H(+). It catalyses the reaction 3,3',5'-triiodo-L-thyronine + 3'-phosphoadenylyl sulfate = 3,3',5'-triiodo-L-thyronine sulfate + adenosine 3',5'-bisphosphate + H(+). The catalysed reaction is 3,3'-diiodo-L-thyronine + 3'-phosphoadenylyl sulfate = 3,3'-diiodo-L-thyronine sulfate + adenosine 3',5'-bisphosphate + H(+). The enzyme catalyses L-thyroxine + 3'-phosphoadenylyl sulfate = L-thyroxine sulfate + adenosine 3',5'-bisphosphate + H(+). In terms of biological role, sulfotransferase that utilizes 3'-phospho-5'-adenylyl sulfate (PAPS) as sulfonate donor to catalyze the sulfate conjugation of phenolic monoamines (neurotransmitters such as dopamine, (R)-adrenaline/epinephrine, (R)-noradrenaline/norepinephrine and serotonin) and phenolic and catechol drugs. Catalyzes the sulfation of T4 (L-thyroxine/3,5,3',5'-tetraiodothyronine), T3 (3,5,3'-triiodothyronine), rT3 (3,3',5'-triiodothyronine) and 3,3'-T2 (3,3'-diiodothyronine), with a substrate preference of 3,3'-T2 &gt; rT3 &gt; T3 &gt; T4. The protein is Sulfotransferase 1A3 (SULT1A3) of Homo sapiens (Human).